The sequence spans 371 residues: Glycerate kinase (371 aa).

Belongs to the glycerate kinase type-1 family.

It carries out the reaction (R)-glycerate + ATP = (2R)-3-phosphoglycerate + ADP + H(+). The polypeptide is Glycerate kinase (glxK) (Neisseria meningitidis serogroup B (strain ATCC BAA-335 / MC58)).